Reading from the N-terminus, the 89-residue chain is Large ribosomal subunit protein bL27 (89 aa).

Positions M1–F26 are disordered.

It belongs to the bacterial ribosomal protein bL27 family.

The chain is Large ribosomal subunit protein bL27 from Desulfovibrio desulfuricans (strain ATCC 27774 / DSM 6949 / MB).